A 130-amino-acid polypeptide reads, in one-letter code: Sulfurtransferase TusD (130 aa).

Cysteine 80 serves as the catalytic Cysteine persulfide intermediate.

This sequence belongs to the DsrE/TusD family. Heterohexamer, formed by a dimer of trimers. The hexameric TusBCD complex contains 2 copies each of TusB, TusC and TusD. The TusBCD complex interacts with TusE.

The protein localises to the cytoplasm. In terms of biological role, part of a sulfur-relay system required for 2-thiolation of 5-methylaminomethyl-2-thiouridine (mnm(5)s(2)U) at tRNA wobble positions. Accepts sulfur from TusA and transfers it in turn to TusE. This chain is Sulfurtransferase TusD, found in Proteus mirabilis (strain HI4320).